The sequence spans 190 residues: MYVAIEGVDTCGKSTQIALLKRRFPGAIFTKEPGGTALGMKLRELLLGGEAKSAKAELLLFLADRAEHMELVIKPALDKLLFSDRSLISGMAYAKGWDELWLKSLNLFATEGIVPDKVVILELTAKELSYRLSQKSHDSIESRGVEYLLELQERIKQMTALLGIPSLTLSASLSPEEIHGRIVSGFVLKG.

Residue 7–14 (GVDTCGKS) coordinates ATP.

The protein belongs to the thymidylate kinase family.

The catalysed reaction is dTMP + ATP = dTDP + ADP. Phosphorylation of dTMP to form dTDP in both de novo and salvage pathways of dTTP synthesis. This Wolinella succinogenes (strain ATCC 29543 / DSM 1740 / CCUG 13145 / JCM 31913 / LMG 7466 / NCTC 11488 / FDC 602W) (Vibrio succinogenes) protein is Thymidylate kinase.